We begin with the raw amino-acid sequence, 235 residues long: Thiamine-phosphate synthase (235 aa).

Residues 50–54 (QLRDK) and N91 each bind 4-amino-2-methyl-5-(diphosphooxymethyl)pyrimidine. D92 and D111 together coordinate Mg(2+). Residue S130 coordinates 4-amino-2-methyl-5-(diphosphooxymethyl)pyrimidine. A 2-[(2R,5Z)-2-carboxy-4-methylthiazol-5(2H)-ylidene]ethyl phosphate-binding site is contributed by 160-162 (TPT). K163 provides a ligand contact to 4-amino-2-methyl-5-(diphosphooxymethyl)pyrimidine. G191 is a 2-[(2R,5Z)-2-carboxy-4-methylthiazol-5(2H)-ylidene]ethyl phosphate binding site.

The protein belongs to the thiamine-phosphate synthase family. The cofactor is Mg(2+).

It carries out the reaction 2-[(2R,5Z)-2-carboxy-4-methylthiazol-5(2H)-ylidene]ethyl phosphate + 4-amino-2-methyl-5-(diphosphooxymethyl)pyrimidine + 2 H(+) = thiamine phosphate + CO2 + diphosphate. The catalysed reaction is 2-(2-carboxy-4-methylthiazol-5-yl)ethyl phosphate + 4-amino-2-methyl-5-(diphosphooxymethyl)pyrimidine + 2 H(+) = thiamine phosphate + CO2 + diphosphate. The enzyme catalyses 4-methyl-5-(2-phosphooxyethyl)-thiazole + 4-amino-2-methyl-5-(diphosphooxymethyl)pyrimidine + H(+) = thiamine phosphate + diphosphate. The protein operates within cofactor biosynthesis; thiamine diphosphate biosynthesis; thiamine phosphate from 4-amino-2-methyl-5-diphosphomethylpyrimidine and 4-methyl-5-(2-phosphoethyl)-thiazole: step 1/1. Condenses 4-methyl-5-(beta-hydroxyethyl)thiazole monophosphate (THZ-P) and 2-methyl-4-amino-5-hydroxymethyl pyrimidine pyrophosphate (HMP-PP) to form thiamine monophosphate (TMP). This is Thiamine-phosphate synthase from Mycobacterium leprae (strain TN).